Here is a 184-residue protein sequence, read N- to C-terminus: Photosystem I assembly protein Ycf4 (184 aa).

2 helical membrane-spanning segments follow: residues 22–42 and 64–84; these read FCWACILLLGSLGFLLVGISS and IVMSFYGIAGLFISSYLWSTI.

It belongs to the Ycf4 family.

It is found in the plastid. It localises to the chloroplast thylakoid membrane. Seems to be required for the assembly of the photosystem I complex. This is Photosystem I assembly protein Ycf4 from Piper cenocladum (Ant piper).